Here is a 205-residue protein sequence, read N- to C-terminus: Small ribosomal subunit protein uS4 (205 aa).

Residues 18-46 form a disordered region; that stretch reads NIWGRPKSPVNRREYGPGQHGQRRKGKLS. The region spanning 94 to 157 is the S4 RNA-binding domain; that stretch reads RRLDTVVYRA…KQLAFVLEAS (64 aa).

It belongs to the universal ribosomal protein uS4 family. As to quaternary structure, part of the 30S ribosomal subunit. Contacts protein S5. The interaction surface between S4 and S5 is involved in control of translational fidelity.

Functionally, one of the primary rRNA binding proteins, it binds directly to 16S rRNA where it nucleates assembly of the body of the 30S subunit. In terms of biological role, with S5 and S12 plays an important role in translational accuracy. The sequence is that of Small ribosomal subunit protein uS4 from Rhodopseudomonas palustris (strain HaA2).